Here is a 364-residue protein sequence, read N- to C-terminus: Chorismate synthase (364 aa).

R48 is a binding site for NADP(+). Residues 131–133, 243–244, G288, 303–307, and R329 each bind FMN; these read RSS, NA, and KPTSS.

The protein belongs to the chorismate synthase family. Homotetramer. FMNH2 serves as cofactor.

The catalysed reaction is 5-O-(1-carboxyvinyl)-3-phosphoshikimate = chorismate + phosphate. It functions in the pathway metabolic intermediate biosynthesis; chorismate biosynthesis; chorismate from D-erythrose 4-phosphate and phosphoenolpyruvate: step 7/7. In terms of biological role, catalyzes the anti-1,4-elimination of the C-3 phosphate and the C-6 proR hydrogen from 5-enolpyruvylshikimate-3-phosphate (EPSP) to yield chorismate, which is the branch point compound that serves as the starting substrate for the three terminal pathways of aromatic amino acid biosynthesis. This reaction introduces a second double bond into the aromatic ring system. The protein is Chorismate synthase of Brucella abortus (strain S19).